The sequence spans 147 residues: Hemoglobin subunit beta (147 aa).

One can recognise a Globin domain in the interval 2 to 147; that stretch reads EWTDAERSAI…VVSALCRQYH (146 aa). Heme b-binding residues include histidine 63 and histidine 92.

This sequence belongs to the globin family. Heterotetramer of two alpha chains and two beta chains. Red blood cells.

Its function is as follows. Involved in oxygen transport from gills to the various peripheral tissues. The sequence is that of Hemoglobin subunit beta (hbb) from Carassius auratus (Goldfish).